The following is a 49-amino-acid chain: Large ribosomal subunit protein uL16 (49 aa).

This sequence belongs to the universal ribosomal protein uL16 family. Part of the 50S ribosomal subunit.

Binds 23S rRNA and is also seen to make contacts with the A and possibly P site tRNAs. This Aquifex pyrophilus protein is Large ribosomal subunit protein uL16 (rplP).